Reading from the N-terminus, the 137-residue chain is Large ribosomal subunit protein uL16 (137 aa).

It belongs to the universal ribosomal protein uL16 family. As to quaternary structure, part of the 50S ribosomal subunit.

Functionally, binds 23S rRNA and is also seen to make contacts with the A and possibly P site tRNAs. In Nitrobacter hamburgensis (strain DSM 10229 / NCIMB 13809 / X14), this protein is Large ribosomal subunit protein uL16.